Consider the following 63-residue polypeptide: MSKKCQLTGKVANNGYAVSHSHKRTKKLQKVNLQHKKVWSSGQNKWVKMLISTKAIKTLTQTL.

This sequence belongs to the bacterial ribosomal protein bL28 family.

Its subcellular location is the plastid. The protein resides in the chloroplast. In Pyropia yezoensis (Susabi-nori), this protein is Large ribosomal subunit protein bL28c.